Consider the following 876-residue polypeptide: DNA topoisomerase 1 (876 aa).

The Toprim domain occupies 3–150; that stretch reads KSLVIVESPA…RYKRVVFNEI (148 aa). A Mg(2+)-binding site is contributed by glutamate 9. The disordered stretch occupies residues 37–69; that stretch reads LPTAGQTATPTGKAAAASTKKASTTDKEQQKRE. The segment covering 38–58 has biased composition (low complexity); it reads PTAGQTATPTGKAAAASTKKA. A compositionally biased stretch (basic and acidic residues) spans 59–69; that stretch reads STTDKEQQKRE. Position 119 (aspartate 119) interacts with Mg(2+). Residues 166–582 enclose the Topo IA-type catalytic domain; the sequence is NMDGVNAQQA…EFFADFSRDL (417 aa). The segment at 200-205 is interaction with DNA; that stretch reads SAGRVQ. Tyrosine 327 serves as the catalytic O-(5'-phospho-DNA)-tyrosine intermediate. 2 consecutive C4-type zinc fingers follow at residues 668-695 and 717-742; these read CPIC…NPNC and CDKC…NDAC.

Belongs to the type IA topoisomerase family. As to quaternary structure, monomer. Mg(2+) is required as a cofactor.

The catalysed reaction is ATP-independent breakage of single-stranded DNA, followed by passage and rejoining.. Releases the supercoiling and torsional tension of DNA, which is introduced during the DNA replication and transcription, by transiently cleaving and rejoining one strand of the DNA duplex. Introduces a single-strand break via transesterification at a target site in duplex DNA. The scissile phosphodiester is attacked by the catalytic tyrosine of the enzyme, resulting in the formation of a DNA-(5'-phosphotyrosyl)-enzyme intermediate and the expulsion of a 3'-OH DNA strand. The free DNA strand then undergoes passage around the unbroken strand, thus removing DNA supercoils. Finally, in the religation step, the DNA 3'-OH attacks the covalent intermediate to expel the active-site tyrosine and restore the DNA phosphodiester backbone. The sequence is that of DNA topoisomerase 1 from Vibrio cholerae serotype O1 (strain ATCC 39315 / El Tor Inaba N16961).